The sequence spans 193 residues: MSSPIDIVEKKLLSDHWFILHKYVFDLKRKNGGVVRQIREVYDRGDGATILLYNRAKGTVILTRQFRIPTYVNGNESGMLLEACAGLLDDYSPEECIRNEAIEETGYAVGNVEKLFDAYMSPGGVTERLHFFAAEYDESLRDNSGGGVEDEDIEVLELPFSEAIAMMNDGRIKDGKTIMLLQHAIIRGWFAKG.

GDP-alpha-D-mannose-binding positions include 38–40, Arg67, and 85–87; these read IRE and AGL. In terms of domain architecture, Nudix hydrolase spans 43–180; it reads DRGDGATILL…RIKDGKTIML (138 aa). 3 residues coordinate Mg(2+): Ala85, Glu100, and Glu104. The Nudix box signature appears at 86–106; sequence GLLDDYSPEECIRNEAIEETG. GDP-alpha-D-mannose is bound by residues Glu104, Glu127, 150–151, and Lys176; that span reads DE. Glu151 contributes to the Mg(2+) binding site.

Belongs to the Nudix hydrolase family. NudK subfamily. As to quaternary structure, homodimer. Mg(2+) is required as a cofactor.

It carries out the reaction GDP-alpha-D-mannose + H2O = alpha-D-mannose 1-phosphate + GMP + 2 H(+). Nucleoside diphosphate sugar hydrolase that hydrolyzes GDP-mannose as its preferred substrate, yielding GMP and mannose-1-phosphate. The polypeptide is GDP-mannose pyrophosphatase (nudK) (Pectobacterium atrosepticum (strain SCRI 1043 / ATCC BAA-672) (Erwinia carotovora subsp. atroseptica)).